Here is a 191-residue protein sequence, read N- to C-terminus: MGILYSEPICQAAYQNDLGQVWRWAKESNHYVDVQDSFNGDTPLICACRRGHLRIVSFLLRRNADVNLKNLKERTCLHYAVKKRFTFFDYLLIILLMPVLLIGYFLMVSKTKQNETLVRMLLNAGVEVNATDCDGYTALHYACQMKNQTLIPLLLEAHADPMIKNKHGESSLDIAQRLKFSQIALMLKRAS.

4 ANK repeats span residues 39–68 (NGDT…DVNL), 72–100 (KERT…MPVL), 101–130 (LIGY…EVNA), and 134–163 (DGYT…DPMI).

The polypeptide is Ankyrin repeat domain-containing protein 22 (Ankrd22) (Mus musculus (Mouse)).